The primary structure comprises 42 residues: Profilin (42 aa).

Belongs to the profilin family. In terms of assembly, occurs in many kinds of cells as a complex with monomeric actin in a 1:1 ratio.

The protein resides in the cytoplasm. Its subcellular location is the cytoskeleton. Functionally, binds to actin and affects the structure of the cytoskeleton. At high concentrations, profilin prevents the polymerization of actin, whereas it enhances it at low concentrations. This Plantago lanceolata (English plantain) protein is Profilin.